The sequence spans 432 residues: Transcription factor E2F1 (432 aa).

Disordered regions lie at residues 39 to 85 and 98 to 126; these read DVGA…GRPP and YLAG…KSRY. Residues 65–106 are cyclin A:CDK2 binding; it reads ATPQAPRPAPSAPRPALGRPPVKRRLDLETDHQYLAGSSGPF. The segment at 87 to 189 is interaction with BIRC2/c-IAP1; sequence KRRLDLETDH…KKSKNHIQWL (103 aa). The DNA-binding element occupies 108–192; sequence GRGRHPGKGV…KNHIQWLGSR (85 aa). An N6-acetyllysine mark is found at K115, K118, and K123. Residues 151-172 form a leucine-zipper region; sequence LNWAAEVLKVQKRRIYDITNVL. The DEF box motif lies at 156–192; the sequence is EVLKVQKRRIYDITNVLEGIQLIAKKSKNHIQWLGSR. Residue K183 is modified to N6-methyllysine; by SETD7. A required for interaction with TRIM28 region spans residues 190-377; sequence GSRTMVGIGQ…RLSPLVAADS (188 aa). Residues 193-282 are dimerization; sequence TMVGIGQRLE…AVDSAETFQI (90 aa). The interval 297-342 is disordered; it reads PEESAEGISPGRTSYQETSGEDRNADSGTAGPPPSPPSTSPTLDPS. Residues 363–432 are transactivation; the sequence is PMEEDRLSPL…DFGDLTPLDF (70 aa). S370 and S398 each carry phosphoserine. The segment at 404–421 is RB1 binding; the sequence is VDYHFGLEEGEGIRDLFD. T428 is subject to Phosphothreonine.

The protein belongs to the E2F/DP family. In terms of assembly, component of the DRTF1/E2F transcription factor complex. Forms heterodimers with DP family members. The E2F1 complex binds specifically hypophosphorylated RB1, the interaction represses E2F1-driven transcription. During the cell cycle, RB1 becomes phosphorylated in mid-to-late G1 phase, detaches from the DRTF1/E2F complex, rendering E2F transcriptionally active. Interacts with TRRAP, which probably mediates its interaction with histone acetyltransferase complexes, leading to transcription activation. Binds TOPBP1 and EAPP. Interacts with ARID3A. Interacts with TRIM28; the interaction inhibits E2F1 acetylation through recruiting HDAC1 and represses its transcriptional activity. Interaction with KAT2B; the interaction acetylates E2F1 enhancing its DNA-binding and transcriptional activity. Interacts with BIRC2/c-IAP1 (via BIR domains). The complex TFDP1:E2F1 interacts with CEBPA; the interaction prevents CEBPA binding to target genes promoters and represses its transcriptional activity. Interacts with RRP1B. Interacts with HCFC1. Interacts with KMT2E; the interaction is probably indirect and is mediated via HCFC1. Interacts with DCAF5 and L3MBTL3; the interaction requires methylation at Lys-183 and is necessary to target E2F1 for ubiquitination by the CRL4-DCAF5 E3 ubiquitin ligase complex. Post-translationally, phosphorylated by CDK2 and cyclin A-CDK2 in the S-phase. Phosphorylation by CHEK2 stabilizes E2F1 upon DNA damage and regulates its effect on transcription and apoptosis. Phosphorylation at Ser-398 by GSK3B promotes interaction with USP11, leading to its deubiquitination and stabilization. In terms of processing, ubiquitinated via 'Lys-63'-linked ubiquitin, leading to its degradation. Deubiquitinated by USP11 following phosphorylation by GSK3B, promoting its stability. Acetylation stimulates DNA-binding. Enhanced under stress conditions such as DNA damage and inhibited by retinoblastoma protein RB1. Regulated by KAP1/TRIM28 which recruits HDAC1 to E2F1 resulting in deacetylation. Post-translationally, methylation at Lys-183 by SETD7 promotes E2F1 ubiquitin-dependent proteasomal degradation.

The protein resides in the nucleus. Its activity is regulated as follows. BIRC2/c-IAP1 stimulates its transcriptional activity. In terms of biological role, transcription activator that binds DNA cooperatively with DP proteins through the E2 recognition site, 5'-TTTC[CG]CGC-3' found in the promoter region of a number of genes whose products are involved in cell cycle regulation or in DNA replication. The DRTF1/E2F complex functions in the control of cell-cycle progression from G1 to S phase. E2F1 binds preferentially RB1 in a cell-cycle dependent manner. It can mediate both cell proliferation and TP53/p53-dependent apoptosis. Blocks adipocyte differentiation by binding to specific promoters repressing CEBPA binding to its target gene promoters. Directly activates transcription of PEG10. Positively regulates transcription of RRP1B. This chain is Transcription factor E2F1, found in Rattus norvegicus (Rat).